A 388-amino-acid polypeptide reads, in one-letter code: RNA binding motif protein, X-linked-like-1 (388 aa).

Residues 8-86 enclose the RRM domain; sequence GKLFIGGLNT…KAIKVEQATK (79 aa). Over residues 61–80 the composition is skewed to basic and acidic residues; sequence DAKDVARDMNGKSLDGKAIK. A disordered region spans residues 61-388; it reads DAKDVARDMN…SDRGGGQKQI (328 aa). Lys-80 is covalently cross-linked (Glycyl lysine isopeptide (Lys-Gly) (interchain with G-Cter in SUMO2)). Ser-88 bears the Phosphoserine mark. Residues 148–161 are compositionally biased toward pro residues; that stretch reads RGPPPRSGGPPPKR. Composition is skewed to basic and acidic residues over residues 191-212 and 238-271; these read PRREPLPSRRDVYLSPRDDGYS and YTYRDYSHSSSRDDYPSRGYGDRDGYGRDREYSD. Residues 320 to 332 show a composition bias toward low complexity; sequence SRDSYSSSRSDLY. 2 stretches are compositionally biased toward basic and acidic residues: residues 333-344 and 377-388; these read SSDRDRVGRQER and SRSDRGGGQKQI.

It is found in the nucleus. Its function is as follows. RNA-binding protein which may be involved in pre-mRNA splicing. The sequence is that of RNA binding motif protein, X-linked-like-1 (Rbmxl1) from Rattus norvegicus (Rat).